We begin with the raw amino-acid sequence, 974 residues long: Protein bicaudal C homolog 1 (974 aa).

The disordered stretch occupies residues Met-1 to Arg-50. A phosphoserine mark is found at Ser-26, Ser-31, and Ser-43. KH domains follow at residues Arg-132–Ile-199 and Pro-284–Leu-348. An N6-acetyllysine modification is found at Lys-398. Phosphoserine occurs at positions 576, 612, and 679. Disordered stretches follow at residues Val-593–Lys-644, Gly-665–Pro-719, and Tyr-783–Glu-846. Residues Ser-602–Glu-619 are compositionally biased toward polar residues. A compositionally biased stretch (basic and acidic residues) spans Leu-690 to Glu-703. An SAM domain is found at Phe-873–Asn-936.

Belongs to the BicC family. As to quaternary structure, interacts (via KH domains) with ANKS6 (via SAM domain) in an RNA-dependent manner. Interacts with ANKS3.

It localises to the cytoplasm. Putative RNA-binding protein. Acts as a negative regulator of Wnt signaling. May be involved in regulating gene expression during embryonic development. This Homo sapiens (Human) protein is Protein bicaudal C homolog 1 (BICC1).